A 634-amino-acid polypeptide reads, in one-letter code: Alpha-L-iduronidase (634 aa).

A signal peptide spans 1 to 16 (MLTFFAAFLAAPLALA). The alpha-D-mannopyranose site is built by Pro44, Leu46, and His48. His81 serves as a coordination point for alpha-L-iduronate. N-linked (GlcNAc...) asparagine glycosylation occurs at Asn100. Asn171 and Glu172 together coordinate alpha-L-iduronate. Glu172 serves as the catalytic Proton donor. Residues Asn180 and Asn233 are each glycosylated (N-linked (GlcNAc...) asparagine). Alpha-L-iduronate contacts are provided by Lys254, Glu289, and Gly295. The active-site Nucleophile is Glu289. Alpha-D-mannopyranose is bound at residue Trp296. Asn326 carries N-linked (GlcNAc...) asparagine glycosylation. The alpha-L-iduronate site is built by Asp339 and Arg353. N-linked (GlcNAc...) asparagine glycans are attached at residues Asn362, Asn405, and Asn441. Cysteines 531 and 567 form a disulfide.

Belongs to the glycosyl hydrolase 39 family. As to quaternary structure, monomer. N-glycosylation contributes to substrate binding and is required for full enzymatic activity. Ubiquitous.

It is found in the lysosome. The catalysed reaction is Hydrolysis of unsulfated alpha-L-iduronosidic linkages in dermatan sulfate.. The polypeptide is Alpha-L-iduronidase (Idua) (Mus musculus (Mouse)).